Here is a 600-residue protein sequence, read N- to C-terminus: Integrator complex subunit 11 (600 aa).

His-68, His-70, Asp-72, His-73, His-157, and Asp-178 together coordinate Zn(2+). The short motif at 68-73 is the HXHXDH motif element; that stretch reads HFHLDH. Residue Glu-203 is part of the active site. Lys-381 is covalently cross-linked (Glycyl lysine isopeptide (Lys-Gly) (interchain with G-Cter in SUMO)). His-414 serves as a coordination point for Zn(2+). Glycyl lysine isopeptide (Lys-Gly) (interchain with G-Cter in SUMO) cross-links involve residues Lys-462 and Lys-475. The Nuclear localization signal motif lies at 469–479; it reads LLPEAKKPRLL.

The protein belongs to the metallo-beta-lactamase superfamily. RNA-metabolizing metallo-beta-lactamase-like family. INTS11 subfamily. Component of the Integrator complex, composed of core subunits INTS1, INTS2, INTS3, INTS4, INTS5, INTS6, INTS7, INTS8, INTS9/RC74, INTS10, INTS11/CPSF3L, INTS12, INTS13, INTS14 and INTS15. The core complex associates with protein phosphatase 2A subunits PPP2CA and PPP2R1A, to form the Integrator-PP2A (INTAC) complex. INTS11 is part of the RNA endonuclease subcomplex, composed of INTS4, INTS9, INTS11 and inositol hexakisphosphate (InsP6). Interacts with WDR73; interaction is required for the assembly of the RNA endonuclease subcomplex in the cytoplasm. Interacts with BRAT1; interaction is required for the assembly of the RNA endonuclease subcomplex and inhibits the endonuclease activity of INTS11 before formation of mature integrator complex. Zn(2+) is required as a cofactor. Sumoylated; sumoylation regulates its subcellular location and is required for integrator complex integrity.

The protein localises to the nucleus. The protein resides in the cytoplasm. With respect to regulation, the RNA endonuclease activity is inhibited by BRAT1 that forms hyrogen bond and hydrophobic interactions with the active site. In terms of biological role, RNA endonuclease component of the integrator complex, a multiprotein complex that terminates RNA polymerase II (Pol II) transcription in the promoter-proximal region of genes. The integrator complex provides a quality checkpoint during transcription elongation by driving premature transcription termination of transcripts that are unfavorably configured for transcriptional elongation: the complex terminates transcription by (1) catalyzing dephosphorylation of the C-terminal domain (CTD) of Pol II subunit POLR2A/RPB1 and SUPT5H/SPT5, (2) degrading the exiting nascent RNA transcript via endonuclease activity and (3) promoting the release of Pol II from bound DNA. The integrator complex is also involved in terminating the synthesis of non-coding Pol II transcripts, such as enhancer RNAs (eRNAs), small nuclear RNAs (snRNAs), telomerase RNAs and long non-coding RNAs (lncRNAs). Within the integrator complex, INTS11 constitutes the RNA endonuclease subunit that degrades exiting nascent RNA transcripts. Mediates recruitment of cytoplasmic dynein to the nuclear envelope, probably as component of the integrator complex. The sequence is that of Integrator complex subunit 11 from Mus musculus (Mouse).